Reading from the N-terminus, the 249-residue chain is uncharacterized protein (249 aa).

Positions 1 to 20 are cleaved as a signal peptide; that stretch reads MSNQNKVLSLGLLLLAAVAA.

Belongs to the IIV-6 117L family.

This is an uncharacterized protein from Acheta domesticus (House cricket).